Consider the following 629-residue polypeptide: tRNA uridine 5-carboxymethylaminomethyl modification enzyme MnmG (629 aa).

Residues 13-18 (GGGHAG), valine 125, and serine 180 each bind FAD. An NAD(+)-binding site is contributed by 273–287 (GPRYCPSIEDKVMRF). Glutamine 370 serves as a coordination point for FAD.

Belongs to the MnmG family. As to quaternary structure, homodimer. Heterotetramer of two MnmE and two MnmG subunits. FAD serves as cofactor.

The protein resides in the cytoplasm. Its function is as follows. NAD-binding protein involved in the addition of a carboxymethylaminomethyl (cmnm) group at the wobble position (U34) of certain tRNAs, forming tRNA-cmnm(5)s(2)U34. The sequence is that of tRNA uridine 5-carboxymethylaminomethyl modification enzyme MnmG from Psychromonas ingrahamii (strain DSM 17664 / CCUG 51855 / 37).